Consider the following 692-residue polypeptide: Methionine--tRNA ligase (692 aa).

Residues 12 to 22 (PYANGSFHIGH) carry the 'HIGH' region motif. 4 residues coordinate Zn(2+): Cys-143, Cys-146, Cys-156, and Cys-159. The short motif at 341–345 (KMSKS) is the 'KMSKS' region element. An ATP-binding site is contributed by Lys-344. In terms of domain architecture, tRNA-binding spans 586–692 (DFAKIDLRIA…PGAQPGMRVR (107 aa)).

This sequence belongs to the class-I aminoacyl-tRNA synthetase family. MetG type 1 subfamily. In terms of assembly, homodimer. Zn(2+) is required as a cofactor.

It localises to the cytoplasm. It catalyses the reaction tRNA(Met) + L-methionine + ATP = L-methionyl-tRNA(Met) + AMP + diphosphate. Functionally, is required not only for elongation of protein synthesis but also for the initiation of all mRNA translation through initiator tRNA(fMet) aminoacylation. This chain is Methionine--tRNA ligase, found in Bordetella parapertussis (strain 12822 / ATCC BAA-587 / NCTC 13253).